Consider the following 120-residue polypeptide: Large ribosomal subunit protein uL18 (120 aa).

It belongs to the universal ribosomal protein uL18 family. Part of the 50S ribosomal subunit; part of the 5S rRNA/L5/L18/L25 subcomplex. Contacts the 5S and 23S rRNAs.

Functionally, this is one of the proteins that bind and probably mediate the attachment of the 5S RNA into the large ribosomal subunit, where it forms part of the central protuberance. The sequence is that of Large ribosomal subunit protein uL18 from Rhizobium leguminosarum bv. trifolii (strain WSM2304).